The sequence spans 436 residues: Ribulose bisphosphate carboxylase large chain (436 aa).

2 residues coordinate substrate: N104 and T154. K156 functions as the Proton acceptor in the catalytic mechanism. K158 provides a ligand contact to substrate. Residues K182, D184, and E185 each contribute to the Mg(2+) site. K182 is modified (N6-carboxylysine). Catalysis depends on H275, which acts as the Proton acceptor. 3 residues coordinate substrate: R276, H308, and S360.

This sequence belongs to the RuBisCO large chain family. Type I subfamily. As to quaternary structure, heterohexadecamer of 8 large chains and 8 small chains. Requires Mg(2+) as cofactor.

It localises to the plastid. The protein resides in the chloroplast. It carries out the reaction 2 (2R)-3-phosphoglycerate + 2 H(+) = D-ribulose 1,5-bisphosphate + CO2 + H2O. The catalysed reaction is D-ribulose 1,5-bisphosphate + O2 = 2-phosphoglycolate + (2R)-3-phosphoglycerate + 2 H(+). In terms of biological role, ruBisCO catalyzes two reactions: the carboxylation of D-ribulose 1,5-bisphosphate, the primary event in carbon dioxide fixation, as well as the oxidative fragmentation of the pentose substrate in the photorespiration process. Both reactions occur simultaneously and in competition at the same active site. The chain is Ribulose bisphosphate carboxylase large chain from Euglena viridis (Cercaria viridis).